The primary structure comprises 348 residues: Nicotinate-nucleotide--dimethylbenzimidazole phosphoribosyltransferase (348 aa).

Glu-317 serves as the catalytic Proton acceptor.

Belongs to the CobT family.

It carries out the reaction 5,6-dimethylbenzimidazole + nicotinate beta-D-ribonucleotide = alpha-ribazole 5'-phosphate + nicotinate + H(+). It participates in nucleoside biosynthesis; alpha-ribazole biosynthesis; alpha-ribazole from 5,6-dimethylbenzimidazole: step 1/2. Its function is as follows. Catalyzes the synthesis of alpha-ribazole-5'-phosphate from nicotinate mononucleotide (NAMN) and 5,6-dimethylbenzimidazole (DMB). This chain is Nicotinate-nucleotide--dimethylbenzimidazole phosphoribosyltransferase, found in Clostridioides difficile (strain 630) (Peptoclostridium difficile).